The chain runs to 349 residues: Divinyl chlorophyll a/b light-harvesting protein PcbB (349 aa).

The next 6 helical transmembrane spans lie at Phe27–Leu47, Leu57–Phe77, Ile91–Phe113, Val201–Ala221, Ala241–Ala261, and Leu306–Leu326.

It belongs to the PsbB/PsbC family. IsiA/Pcb subfamily. The antenna complex consists of divinyl chlorophylls (a and b) and divinyl chlorophyll a/b binding proteins and binds more divinyl chlorophyll b than does the antenna complex from high-light-adapted Prochlorococcus. Divinyl chlorophyll a serves as cofactor. It depends on divinyl chlorophyll b as a cofactor.

The protein localises to the cellular thylakoid membrane. The antenna complex functions as a light receptor, it captures and delivers excitation energy to photosystems II and I. The Prochlorales pcb genes are not related to higher plant LHCs. The protein is Divinyl chlorophyll a/b light-harvesting protein PcbB (pcbB) of Prochlorococcus marinus (strain SARG / CCMP1375 / SS120).